Reading from the N-terminus, the 586-residue chain is A-type ATP synthase subunit A (586 aa).

Residue 232 to 239 (GPFGSGKT) participates in ATP binding.

This sequence belongs to the ATPase alpha/beta chains family. Has multiple subunits with at least A(3), B(3), C, D, E, F, H, I and proteolipid K(x).

Its subcellular location is the cell membrane. It catalyses the reaction ATP + H2O + 4 H(+)(in) = ADP + phosphate + 5 H(+)(out). Its function is as follows. Component of the A-type ATP synthase that produces ATP from ADP in the presence of a proton gradient across the membrane. The A chain is the catalytic subunit. This chain is A-type ATP synthase subunit A, found in Methanococcus vannielii (strain ATCC 35089 / DSM 1224 / JCM 13029 / OCM 148 / SB).